Here is a 740-residue protein sequence, read N- to C-terminus: MKKRADPRKIKREEHKQKLSKLQERVDNFGEDEADKEVSKFEELPLSEATIEGLKNSHYVTCTDVQKRAIPPALQGHDLLGAARTGSGKTLAFLVPVLECLFRNKWSDVDGLGALVISPTRELAVQIFQVLRKIGRCHSFSAGLVIGGKDVAMEADRLAKLNILICTPGRLLQHMDQTSGFDLSNVKMLVLDEADRILDMGFKKTMDAILENLPVDRQTLLFSATQTKSVSDLARLSLADPKYISANPDTTSSTPKNLEQNYVCVELQDKLDTLWGFLRTHTKFKIIVFFSSSKQVRYVYETFRTLQPGIPLLHLHGKQKQGARMDVVSKFSKASSSCLFATDIVARGIDFPAVHWVVQVDCPEDAATYIHRVGRSARFGKSGKALLFLTPTEEPAMIQRLEAKHIPINKLTIRPNKKKSIKNQLQALCFKSPEIKYLGQKAFISYYKSIFIQKDKEIFQFEKIPSEAFAESLGLPGAPQIKLGKSAEKMKEEANAKKNQSRALQKLMRAGDDGVVSDDEKEVRTKMDRMFERKNQNVLSDHYLNMVKGDADEDEETGDFMTVKRQDHNLESDDDEDIANLPTSKRAAKQALSKKQSLKNKGLGTKTLFDDEGAPHALYEFDDEEDFKAAGPVESQVKEFVDRETKDMEEADVGDKELVKQKRAEKKRKRKEIERLRELDEYDEESEEEGDSEEEQAAKKPKWFQRDESSDEEEDDGVLEVEEPTTLEDLESLTSKLLKK.

Residues M1–E37 are disordered. Positions P7–N28 are enriched in basic and acidic residues. The short motif at S39–K67 is the Q motif element. Positions I70–I244 constitute a Helicase ATP-binding domain. Residue A83 to T90 participates in ATP binding. The DEAD box signature appears at D192 to D195. Residues N257–I421 form the Helicase C-terminal domain. Residues R565–K740 are disordered. Residues Q636–K662 are compositionally biased toward basic and acidic residues. Acidic residues-rich tracts occupy residues D680–E695 and S709–E731.

It belongs to the DEAD box helicase family. DDX10/DBP4 subfamily. Interacts with the U3 and U14 snoRNAs. Associates with pre-ribosomal complexes.

Its subcellular location is the nucleus. The protein localises to the nucleolus. The enzyme catalyses ATP + H2O = ADP + phosphate + H(+). ATP-dependent RNA helicase required for ribosome biogenesis. Involved in the release of U14 snoRNA in pre-ribosomal complexes. Required for pre-rRNA cleavage at site A2. This chain is ATP-dependent RNA helicase DBP4 (DBP4), found in Yarrowia lipolytica (strain CLIB 122 / E 150) (Yeast).